A 250-amino-acid polypeptide reads, in one-letter code: ATP synthase subunit a (250 aa).

The next 6 membrane-spanning stretches (helical) occupy residues 25–45, 84–104, 115–135, 141–161, 187–209, and 223–243; these read VSFTNSAAFMVGIVALIFFFL, VFFPLVFSLFVFVFVANVIGL, IVVTAALALLVIGTVVIYGFY, FLHLFVPSGVPAFLLPFIVLI, ALKVFAFFVVGLGSAGFLGWLGA, and ELLVAILQAYVFAVLTSIYLN.

This sequence belongs to the ATPase A chain family. In terms of assembly, F-type ATPases have 2 components, CF(1) - the catalytic core - and CF(0) - the membrane proton channel. CF(1) has five subunits: alpha(3), beta(3), gamma(1), delta(1), epsilon(1). CF(0) has three main subunits: a(1), b(2) and c(9-12). The alpha and beta chains form an alternating ring which encloses part of the gamma chain. CF(1) is attached to CF(0) by a central stalk formed by the gamma and epsilon chains, while a peripheral stalk is formed by the delta and b chains.

Its subcellular location is the cell inner membrane. In terms of biological role, key component of the proton channel; it plays a direct role in the translocation of protons across the membrane. This is ATP synthase subunit a from Azorhizobium caulinodans (strain ATCC 43989 / DSM 5975 / JCM 20966 / LMG 6465 / NBRC 14845 / NCIMB 13405 / ORS 571).